A 304-amino-acid chain; its full sequence is UDP-3-O-acyl-N-acetylglucosamine deacetylase (304 aa).

Zn(2+) contacts are provided by histidine 78, histidine 237, and aspartate 241. The active-site Proton donor is histidine 264.

The protein belongs to the LpxC family. It depends on Zn(2+) as a cofactor.

The catalysed reaction is a UDP-3-O-[(3R)-3-hydroxyacyl]-N-acetyl-alpha-D-glucosamine + H2O = a UDP-3-O-[(3R)-3-hydroxyacyl]-alpha-D-glucosamine + acetate. It participates in glycolipid biosynthesis; lipid IV(A) biosynthesis; lipid IV(A) from (3R)-3-hydroxytetradecanoyl-[acyl-carrier-protein] and UDP-N-acetyl-alpha-D-glucosamine: step 2/6. Catalyzes the hydrolysis of UDP-3-O-myristoyl-N-acetylglucosamine to form UDP-3-O-myristoylglucosamine and acetate, the committed step in lipid A biosynthesis. The sequence is that of UDP-3-O-acyl-N-acetylglucosamine deacetylase from Nitrosococcus oceani (strain ATCC 19707 / BCRC 17464 / JCM 30415 / NCIMB 11848 / C-107).